The sequence spans 372 residues: DNA-directed RNA polymerase subunit alpha (372 aa).

Residues 1–268 (MIFDEDSNSI…DQFQPFINFD (268 aa)) are alpha N-terminal domain (alpha-NTD). Residues 280-372 (KDTLPYDSNL…ESLSKQYSEE (93 aa)) are alpha C-terminal domain (alpha-CTD).

The protein belongs to the RNA polymerase alpha chain family. In terms of assembly, homodimer. The RNAP catalytic core consists of 2 alpha, 1 beta, 1 beta' and 1 omega subunit. When a sigma factor is associated with the core the holoenzyme is formed, which can initiate transcription.

The catalysed reaction is RNA(n) + a ribonucleoside 5'-triphosphate = RNA(n+1) + diphosphate. In terms of biological role, DNA-dependent RNA polymerase catalyzes the transcription of DNA into RNA using the four ribonucleoside triphosphates as substrates. The polypeptide is DNA-directed RNA polymerase subunit alpha (Ehrlichia chaffeensis (strain ATCC CRL-10679 / Arkansas)).